The chain runs to 152 residues: Ribosome maturation factor RimP (152 aa).

This sequence belongs to the RimP family.

The protein localises to the cytoplasm. In terms of biological role, required for maturation of 30S ribosomal subunits. The protein is Ribosome maturation factor RimP of Burkholderia orbicola (strain MC0-3).